We begin with the raw amino-acid sequence, 222 residues long: MGKYMKKSKITGDISVMEVSKATAPSPGVRTRAAKTLALKRLNSSAADSALPNDSSCYLQLRSRRLEKPSSLIEPKQPPRVHRSGIKESGSRSRVDSVNSVPVAQSSNEDECFDNFVSVQVSCGENSLGFESRHSTRESTPCNFVEDMEIMVTPGSSTRSMCRATKEYTREQDNVIPTTSEMEEFFAYAEQQQQRLFMEKYNFDIVNDIPLSGRYEWVQVKP.

The disordered stretch occupies residues 68-101; sequence KPSSLIEPKQPPRVHRSGIKESGSRSRVDSVNSV. The segment covering 85–95 has biased composition (basic and acidic residues); sequence GIKESGSRSRV.

This sequence belongs to the CDI family. ICK/KRP subfamily. Specifically interacts with CDKA-1, but not with CDKB1-1.

It is found in the nucleus. It localises to the nucleoplasm. Binds and inhibits CYCD2-1/CDKA-1 complex kinase activity. May target specifically CDKA-1. The polypeptide is Cyclin-dependent kinase inhibitor 3 (KRP3) (Arabidopsis thaliana (Mouse-ear cress)).